A 148-amino-acid polypeptide reads, in one-letter code: SsrA-binding protein (148 aa).

Over residues Glu129–Arg142 the composition is skewed to basic and acidic residues. The tract at residues Glu129–Thr148 is disordered.

Belongs to the SmpB family.

The protein resides in the cytoplasm. In terms of biological role, required for rescue of stalled ribosomes mediated by trans-translation. Binds to transfer-messenger RNA (tmRNA), required for stable association of tmRNA with ribosomes. tmRNA and SmpB together mimic tRNA shape, replacing the anticodon stem-loop with SmpB. tmRNA is encoded by the ssrA gene; the 2 termini fold to resemble tRNA(Ala) and it encodes a 'tag peptide', a short internal open reading frame. During trans-translation Ala-aminoacylated tmRNA acts like a tRNA, entering the A-site of stalled ribosomes, displacing the stalled mRNA. The ribosome then switches to translate the ORF on the tmRNA; the nascent peptide is terminated with the 'tag peptide' encoded by the tmRNA and targeted for degradation. The ribosome is freed to recommence translation, which seems to be the essential function of trans-translation. In Burkholderia lata (strain ATCC 17760 / DSM 23089 / LMG 22485 / NCIMB 9086 / R18194 / 383), this protein is SsrA-binding protein.